A 265-amino-acid polypeptide reads, in one-letter code: uncharacterized protein (265 aa).

2 disordered regions span residues 21–53 (TLTH…LGPH) and 78–133 (HAPS…SSVS). Residues 90-101 (DDDDDDEDDDDS) are compositionally biased toward acidic residues. Positions 114–123 (SSSSSSSPRV) are enriched in low complexity. 137–144 (AILHQGKS) lines the ATP pocket.

This is an uncharacterized protein from Saccharomyces cerevisiae (strain ATCC 204508 / S288c) (Baker's yeast).